Consider the following 174-residue polypeptide: Ribosome maturation factor RimM (174 aa).

In terms of domain architecture, PRC barrel spans 97–171; that stretch reads SDGEYYWCDL…RMTVSLPEGL (75 aa).

Belongs to the RimM family. Binds ribosomal protein uS19.

It is found in the cytoplasm. Functionally, an accessory protein needed during the final step in the assembly of 30S ribosomal subunit, possibly for assembly of the head region. Essential for efficient processing of 16S rRNA. May be needed both before and after RbfA during the maturation of 16S rRNA. It has affinity for free ribosomal 30S subunits but not for 70S ribosomes. The protein is Ribosome maturation factor RimM of Geotalea daltonii (strain DSM 22248 / JCM 15807 / FRC-32) (Geobacter daltonii).